The primary structure comprises 494 residues: Guanosine-5'-triphosphate,3'-diphosphate pyrophosphatase (494 aa).

Belongs to the GppA/Ppx family. GppA subfamily.

It catalyses the reaction guanosine 3'-diphosphate 5'-triphosphate + H2O = guanosine 3',5'-bis(diphosphate) + phosphate + H(+). It participates in purine metabolism; ppGpp biosynthesis; ppGpp from GTP: step 2/2. In terms of biological role, catalyzes the conversion of pppGpp to ppGpp. Guanosine pentaphosphate (pppGpp) is a cytoplasmic signaling molecule which together with ppGpp controls the 'stringent response', an adaptive process that allows bacteria to respond to amino acid starvation, resulting in the coordinated regulation of numerous cellular activities. This is Guanosine-5'-triphosphate,3'-diphosphate pyrophosphatase from Erwinia tasmaniensis (strain DSM 17950 / CFBP 7177 / CIP 109463 / NCPPB 4357 / Et1/99).